A 258-amino-acid chain; its full sequence is UPF0246 protein YPK_3600 (258 aa).

It belongs to the UPF0246 family.

In Yersinia pseudotuberculosis serotype O:3 (strain YPIII), this protein is UPF0246 protein YPK_3600.